The chain runs to 356 residues: tRNA N6-adenosine threonylcarbamoyltransferase (356 aa).

Residues His115 and His119 each coordinate Fe cation. Substrate contacts are provided by residues 138–142 (LVSGG), Asp171, Gly184, and Asn283. Asp311 contacts Fe cation.

This sequence belongs to the KAE1 / TsaD family. Fe(2+) is required as a cofactor.

It localises to the cytoplasm. The catalysed reaction is L-threonylcarbamoyladenylate + adenosine(37) in tRNA = N(6)-L-threonylcarbamoyladenosine(37) in tRNA + AMP + H(+). Required for the formation of a threonylcarbamoyl group on adenosine at position 37 (t(6)A37) in tRNAs that read codons beginning with adenine. Is involved in the transfer of the threonylcarbamoyl moiety of threonylcarbamoyl-AMP (TC-AMP) to the N6 group of A37, together with TsaE and TsaB. TsaD likely plays a direct catalytic role in this reaction. The polypeptide is tRNA N6-adenosine threonylcarbamoyltransferase (Prochlorococcus marinus (strain MIT 9312)).